The sequence spans 189 residues: Pyridoxal 5'-phosphate synthase subunit PdxT (189 aa).

An L-glutamine-binding site is contributed by 52–54; the sequence is GES. The active-site Nucleophile is the C81. Residues R108 and 136–137 each bind L-glutamine; that span reads IR. Residues H172 and E174 each act as charge relay system in the active site.

It belongs to the glutaminase PdxT/SNO family. As to quaternary structure, in the presence of PdxS, forms a dodecamer of heterodimers. Only shows activity in the heterodimer.

The catalysed reaction is aldehydo-D-ribose 5-phosphate + D-glyceraldehyde 3-phosphate + L-glutamine = pyridoxal 5'-phosphate + L-glutamate + phosphate + 3 H2O + H(+). It carries out the reaction L-glutamine + H2O = L-glutamate + NH4(+). It participates in cofactor biosynthesis; pyridoxal 5'-phosphate biosynthesis. Functionally, catalyzes the hydrolysis of glutamine to glutamate and ammonia as part of the biosynthesis of pyridoxal 5'-phosphate. The resulting ammonia molecule is channeled to the active site of PdxS. This is Pyridoxal 5'-phosphate synthase subunit PdxT from Haemophilus ducreyi (strain 35000HP / ATCC 700724).